The following is a 260-amino-acid chain: Potassium inward rectifier (Kir)-like channel 3 (260 aa).

The tract at residues 1–34 (MPMTPSEFKNRLLFGSLPRSSSDPTDLQFTEPNV) is disordered. Over 1–68 (MPMTPSEFKN…EQSVSKSIAR (68 aa)) the chain is Cytoplasmic. The segment covering 18-31 (PRSSSDPTDLQFTE) has biased composition (polar residues). Residues 69–89 (QALALLVVYLSLGVLIYWLTL) form a helical membrane-spanning segment. Residues 127-146 (DSFCFSVMMVTTVGFGDRAF) constitute an intramembrane region (pore-forming). A helical transmembrane segment spans residues 153–173 (FLAAVWLLVSTLAVARAFLFL). Residues 174–260 (ADARADKRNR…LVDLTTATSV (87 aa)) lie on the Cytoplasmic side of the membrane. EF-hand domains are found at residues 190 to 225 (LGES…QMEK) and 229 to 256 (EDFI…DLTT). Ca(2+)-binding residues include aspartate 203, aspartate 205, aspartate 207, arginine 209, glutamate 214, aspartate 242, serine 246, arginine 248, and aspartate 253.

It belongs to the two pore domain potassium channel (TC 1.A.1.7) family. As to quaternary structure, homotetramer. Expressed in hydathodes and the vascular tissues of roots, stems, leaves and flowers.

It localises to the vacuole membrane. In terms of biological role, probable calcium-activated potassium channel. This Arabidopsis thaliana (Mouse-ear cress) protein is Potassium inward rectifier (Kir)-like channel 3 (KCO3).